We begin with the raw amino-acid sequence, 172 residues long: MASRKTVNRRQRPQRATSNVFAMFDQAQIQEFKEAFNMIDQNRDGFIDQEDLKDMFASLGKEVTEQFIDSMINEAPGAQPINFTMFLTLFGEKLTGTDPEEVIRNAFQCFDEDNSGKLNEEHLRELLTTMGERYSEEQVDELFRDAPIKGGQFDYVEFTRMLKHGTKDKDEA.

T17 bears the Phosphothreonine mark. A Phosphoserine modification is found at S18. EF-hand domains are found at residues 27 to 62 (AQIQEFKEAFNMIDQNRDGFIDQEDLKDMFASLGKE), 98 to 133 (DPEEVIRNAFQCFDEDNSGKLNEEHLRELLTTMGER), and 134 to 168 (YSEEQVDELFRDAPIKGGQFDYVEFTRMLKHGTKD). D40, N42, D44, and D51 together coordinate Ca(2+).

Myosin is a hexamer of 2 heavy chains and 4 light chains (two regulatory light chains and two essential light chains). Post-translationally, may be phosphorylated by let-502 or/and pak-1 and dephosphorylated by mel-11 to regulate its activation and myosin II-mediated contraction. In terms of tissue distribution, expressed in the spermathecal and uterine walls. Weak expression in gonadal sheath and intestinal muscle. Not detected in vulval, pharyngeal or body wall muscles.

It localises to the cytoplasm. The protein localises to the cytoskeleton. Regulates myosin II activity and organization during embryo elongation. May be involved in the organization of mlc-5 into bundles. Required maternally for cytokinesis during meiosis and mitosis in the early embryo and for the establishment of embryonic anterior-posterior polarity. The protein is Myosin regulatory light chain of Caenorhabditis elegans.